Consider the following 466-residue polypeptide: Neuraminidase (466 aa).

The Intravirion portion of the chain corresponds to 1-11 (MLPSTIQTLTL). Residues 12-34 (FLTSGGVLLSLYVSASLSYLLYS) form a helical membrane-spanning segment. An involved in apical transport and lipid raft association region spans residues 13 to 35 (LTSGGVLLSLYVSASLSYLLYSD). The Virion surface portion of the chain corresponds to 35 to 466 (DILLKFSPTK…DTVTGVDMAL (432 aa)). Residues 38–86 (LKFSPTKRTAPTMSLECVNVSNAQAVNHSATKEMTFLLPEPEWTYPRLS) form a hypervariable stalk region region. 2 N-linked (GlcNAc...) asparagine; by host glycosylation sites follow: Asn-56 and Asn-64. Intrachain disulfides connect Cys-87–Cys-420, Cys-122–Cys-127, Cys-182–Cys-229, Cys-231–Cys-236, Cys-277–Cys-291, Cys-279–Cys-289, Cys-318–Cys-337, and Cys-424–Cys-447. A head of neuraminidase region spans residues 89 to 466 (GSTFQKALLI…DTVTGVDMAL (378 aa)). Arg-116 lines the substrate pocket. An N-linked (GlcNAc...) asparagine; by host glycan is attached at Asn-144. Asp-149 acts as the Proton donor/acceptor in catalysis. Arg-150 serves as a coordination point for substrate. 275-276 (EE) serves as a coordination point for substrate. Asn-284 is a glycosylation site (N-linked (GlcNAc...) asparagine; by host). Arg-292 lines the substrate pocket. Ca(2+)-binding residues include Asp-293 and Asp-324. Residue Arg-374 coordinates substrate. The Nucleophile role is filled by Tyr-409.

The protein belongs to the glycosyl hydrolase 34 family. As to quaternary structure, homotetramer. Requires Ca(2+) as cofactor. In terms of processing, N-glycosylated.

The protein localises to the virion membrane. Its subcellular location is the host apical cell membrane. The catalysed reaction is Hydrolysis of alpha-(2-&gt;3)-, alpha-(2-&gt;6)-, alpha-(2-&gt;8)- glycosidic linkages of terminal sialic acid residues in oligosaccharides, glycoproteins, glycolipids, colominic acid and synthetic substrates.. Its activity is regulated as follows. Inhibited by the neuraminidase inhibitors zanamivir (Relenza) and oseltamivir (Tamiflu). These drugs interfere with the release of progeny virus from infected cells and are effective against all influenza strains. Resistance to neuraminidase inhibitors is quite rare. In terms of biological role, catalyzes the removal of terminal sialic acid residues from viral and cellular glycoconjugates. Cleaves off the terminal sialic acids on the glycosylated HA during virus budding to facilitate virus release. Additionally helps virus spread through the circulation by further removing sialic acids from the cell surface. These cleavages prevent self-aggregation and ensure the efficient spread of the progeny virus from cell to cell. Otherwise, infection would be limited to one round of replication. Described as a receptor-destroying enzyme because it cleaves a terminal sialic acid from the cellular receptors. May facilitate viral invasion of the upper airways by cleaving the sialic acid moieties on the mucin of the airway epithelial cells. Likely to plays a role in the budding process through its association with lipid rafts during intracellular transport. May additionally display a raft-association independent effect on budding. Plays a role in the determination of host range restriction on replication and virulence. Sialidase activity in late endosome/lysosome traffic seems to enhance virus replication. This is Neuraminidase from Influenza B virus (strain B/Maryland/1959).